A 341-amino-acid polypeptide reads, in one-letter code: Dimethylsulfoniopropionate lyase 7 (341 aa).

Composition is skewed to basic and acidic residues over residues 1–10 (MAGKDRKTIE) and 319–328 (ERKLAKDRQK). 2 disordered regions span residues 1 to 24 (MAGKDRKTIEKNYPGAEVDEGGRF) and 319 to 341 (ERKLAKDRQKPKPATGTGTAFDA).

It belongs to the aspartate/glutamate racemases family. ALMA1 subfamily. In terms of assembly, homotetramer.

It catalyses the reaction S,S-dimethyl-beta-propiothetin = acrylate + dimethyl sulfide + H(+). Functionally, mediates cleavage of dimethylsulfoniopropionate (DMSP) into dimethyl sulfide (DMS) and acrylate. DMS is the principal form by which sulfur is transported from oceans to the atmosphere and is a key component of the ocean sulfur cycle. This is Dimethylsulfoniopropionate lyase 7 from Emiliania huxleyi (strain CCMP1516).